The chain runs to 572 residues: Phosphoenolpyruvate-protein phosphotransferase (572 aa).

The Tele-phosphohistidine intermediate role is filled by His-190. Phosphoenolpyruvate contacts are provided by Arg-297 and Arg-333. Mg(2+) contacts are provided by Glu-427 and Asp-451. Residues 450–451 and Arg-461 each bind phosphoenolpyruvate; that span reads ND. The active-site Proton donor is the Cys-498.

This sequence belongs to the PEP-utilizing enzyme family. As to quaternary structure, homodimer. Mg(2+) is required as a cofactor.

Its subcellular location is the cytoplasm. It carries out the reaction L-histidyl-[protein] + phosphoenolpyruvate = N(pros)-phospho-L-histidyl-[protein] + pyruvate. Its function is as follows. General (non sugar-specific) component of the phosphoenolpyruvate-dependent sugar phosphotransferase system (sugar PTS). This major carbohydrate active-transport system catalyzes the phosphorylation of incoming sugar substrates concomitantly with their translocation across the cell membrane. Enzyme I transfers the phosphoryl group from phosphoenolpyruvate (PEP) to the phosphoryl carrier protein (HPr). This is Phosphoenolpyruvate-protein phosphotransferase (ptsI) from Mycoplasma genitalium (strain ATCC 33530 / DSM 19775 / NCTC 10195 / G37) (Mycoplasmoides genitalium).